Reading from the N-terminus, the 389-residue chain is Arrestin-C (389 aa).

Belongs to the arrestin family. In terms of tissue distribution, retina and pineal gland.

In terms of biological role, may play a role in an as yet undefined retina-specific signal transduction. Could bind to photoactivated-phosphorylated red/green opsins. This Lithobates pipiens (Northern leopard frog) protein is Arrestin-C (arr3).